Reading from the N-terminus, the 139-residue chain is ATP synthase epsilon chain (139 aa).

The segment at 89–110 (EARAEQARAEAEARRREAQSER) is disordered.

It belongs to the ATPase epsilon chain family. In terms of assembly, F-type ATPases have 2 components, CF(1) - the catalytic core - and CF(0) - the membrane proton channel. CF(1) has five subunits: alpha(3), beta(3), gamma(1), delta(1), epsilon(1). CF(0) has three main subunits: a, b and c.

Its subcellular location is the cell membrane. Its function is as follows. Produces ATP from ADP in the presence of a proton gradient across the membrane. The sequence is that of ATP synthase epsilon chain from Chloroflexus aurantiacus (strain ATCC 29366 / DSM 635 / J-10-fl).